Here is a 152-residue protein sequence, read N- to C-terminus: SsrA-binding protein (152 aa).

The segment covering 132–142 has biased composition (basic and acidic residues); it reads REAIKKRDVSD. Residues 132–152 are disordered; the sequence is REAIKKRDVSDQIRSSLRRSR.

It belongs to the SmpB family.

The protein localises to the cytoplasm. In terms of biological role, required for rescue of stalled ribosomes mediated by trans-translation. Binds to transfer-messenger RNA (tmRNA), required for stable association of tmRNA with ribosomes. tmRNA and SmpB together mimic tRNA shape, replacing the anticodon stem-loop with SmpB. tmRNA is encoded by the ssrA gene; the 2 termini fold to resemble tRNA(Ala) and it encodes a 'tag peptide', a short internal open reading frame. During trans-translation Ala-aminoacylated tmRNA acts like a tRNA, entering the A-site of stalled ribosomes, displacing the stalled mRNA. The ribosome then switches to translate the ORF on the tmRNA; the nascent peptide is terminated with the 'tag peptide' encoded by the tmRNA and targeted for degradation. The ribosome is freed to recommence translation, which seems to be the essential function of trans-translation. The sequence is that of SsrA-binding protein from Bdellovibrio bacteriovorus (strain ATCC 15356 / DSM 50701 / NCIMB 9529 / HD100).